Reading from the N-terminus, the 628-residue chain is 2-oxoacid:ferredoxin oxidoreductase 2, subunit alpha (628 aa).

A YPITP motif motif is present at residues 254 to 258 (YPITP). Substrate is bound by residues threonine 257 and arginine 344.

As to quaternary structure, heterodimer composed of an alpha and a beta subunit.

The enzyme catalyses a 2-oxocarboxylate + 2 oxidized [2Fe-2S]-[ferredoxin] + CoA = an acyl-CoA + 2 reduced [2Fe-2S]-[ferredoxin] + CO2 + H(+). In terms of biological role, catalyzes the coenzyme A-dependent oxidative decarboxylation of different 2-oxoacids such as 2-oxoglutarate, pyruvate and 2-oxobutyrate to form their CoA derivatives. This is 2-oxoacid:ferredoxin oxidoreductase 2, subunit alpha from Sulfurisphaera tokodaii (strain DSM 16993 / JCM 10545 / NBRC 100140 / 7) (Sulfolobus tokodaii).